The following is a 341-amino-acid chain: Methionine import ATP-binding protein MetN 1 (341 aa).

One can recognise an ABC transporter domain in the interval 2-241 (IEFRQVSKTF…PKTTIAQNFV (240 aa)). ATP is bound at residue 38–45 (GYSGAGKS).

It belongs to the ABC transporter superfamily. Methionine importer (TC 3.A.1.24) family. As to quaternary structure, the complex is composed of two ATP-binding proteins (MetN), two transmembrane proteins (MetI) and a solute-binding protein (MetQ).

It is found in the cell membrane. It carries out the reaction L-methionine(out) + ATP + H2O = L-methionine(in) + ADP + phosphate + H(+). The catalysed reaction is D-methionine(out) + ATP + H2O = D-methionine(in) + ADP + phosphate + H(+). Functionally, part of the ABC transporter complex MetNIQ involved in methionine import. Responsible for energy coupling to the transport system. The chain is Methionine import ATP-binding protein MetN 1 from Staphylococcus aureus (strain USA300).